Consider the following 333-residue polypeptide: tRNA(Ile)-lysidine synthase (333 aa).

33–38 (SGGADS) is an ATP binding site.

The protein belongs to the tRNA(Ile)-lysidine synthase family.

The protein localises to the cytoplasm. It catalyses the reaction cytidine(34) in tRNA(Ile2) + L-lysine + ATP = lysidine(34) in tRNA(Ile2) + AMP + diphosphate + H(+). Its function is as follows. Ligates lysine onto the cytidine present at position 34 of the AUA codon-specific tRNA(Ile) that contains the anticodon CAU, in an ATP-dependent manner. Cytidine is converted to lysidine, thus changing the amino acid specificity of the tRNA from methionine to isoleucine. In Salinispora tropica (strain ATCC BAA-916 / DSM 44818 / JCM 13857 / NBRC 105044 / CNB-440), this protein is tRNA(Ile)-lysidine synthase.